Consider the following 231-residue polypeptide: Phosphoheptose isomerase (231 aa).

The SIS domain maps to 35–190; the sequence is LAAVLGGGGR…CAAFDAALER (156 aa). 50–52 is a substrate binding site; that stretch reads NGG. Residues histidine 59 and glutamate 63 each contribute to the Zn(2+) site. Substrate contacts are provided by residues glutamate 63, 92-93, 118-120, serine 123, and glutamine 170; these read ND and STS. Zn(2+)-binding residues include glutamine 170 and histidine 178. Composition is skewed to low complexity over residues 197-206 and 214-225; these read AAGSAASTGR and ASTGRAAGAGRA. The interval 197–231 is disordered; the sequence is AAGSAASTGRAARRERAASTGRAAGAGRAAQRKRR.

It belongs to the SIS family. GmhA subfamily. It depends on Zn(2+) as a cofactor.

It is found in the cytoplasm. It carries out the reaction 2 D-sedoheptulose 7-phosphate = D-glycero-alpha-D-manno-heptose 7-phosphate + D-glycero-beta-D-manno-heptose 7-phosphate. Its pathway is carbohydrate biosynthesis; D-glycero-D-manno-heptose 7-phosphate biosynthesis; D-glycero-alpha-D-manno-heptose 7-phosphate and D-glycero-beta-D-manno-heptose 7-phosphate from sedoheptulose 7-phosphate: step 1/1. In terms of biological role, catalyzes the isomerization of sedoheptulose 7-phosphate in D-glycero-D-manno-heptose 7-phosphate. This Streptomyces coelicolor (strain ATCC BAA-471 / A3(2) / M145) protein is Phosphoheptose isomerase.